Reading from the N-terminus, the 620-residue chain is 1-deoxy-D-xylulose-5-phosphate synthase (620 aa).

Thiamine diphosphate contacts are provided by residues His-80 and 121-123 (GHS). Asp-152 serves as a coordination point for Mg(2+). Residues 153-154 (GA), Asn-181, Tyr-288, and Glu-370 each bind thiamine diphosphate. Residue Asn-181 participates in Mg(2+) binding.

Belongs to the transketolase family. DXPS subfamily. In terms of assembly, homodimer. Requires Mg(2+) as cofactor. It depends on thiamine diphosphate as a cofactor.

It catalyses the reaction D-glyceraldehyde 3-phosphate + pyruvate + H(+) = 1-deoxy-D-xylulose 5-phosphate + CO2. It functions in the pathway metabolic intermediate biosynthesis; 1-deoxy-D-xylulose 5-phosphate biosynthesis; 1-deoxy-D-xylulose 5-phosphate from D-glyceraldehyde 3-phosphate and pyruvate: step 1/1. In terms of biological role, catalyzes the acyloin condensation reaction between C atoms 2 and 3 of pyruvate and glyceraldehyde 3-phosphate to yield 1-deoxy-D-xylulose-5-phosphate (DXP). The sequence is that of 1-deoxy-D-xylulose-5-phosphate synthase from Salmonella agona (strain SL483).